Consider the following 99-residue polypeptide: Cyclin-dependent protein kinase inhibitor SMR7 (99 aa).

The segment at 49 to 70 (ICITPTARGAKTPECPAAPRKR) is disordered.

Expressed in root meristems after induction.

Its function is as follows. Probable cyclin-dependent protein kinase (CDK) inhibitor that functions as a repressor of mitosis in the endoreduplication cell cycle. Acts as a potent cell cycle inhibitor, regulating a hydroxyurea-dependent checkpoint in leaves. The chain is Cyclin-dependent protein kinase inhibitor SMR7 from Arabidopsis thaliana (Mouse-ear cress).